A 246-amino-acid polypeptide reads, in one-letter code: Small ribosomal subunit protein uS2 (246 aa).

The protein belongs to the universal ribosomal protein uS2 family.

The protein is Small ribosomal subunit protein uS2 of Helicobacter acinonychis (strain Sheeba).